A 184-amino-acid polypeptide reads, in one-letter code: Rhox homeobox family member 1 (184 aa).

The tract at residues 26–104 is disordered; sequence QLGAASSAEG…GPQPENMQPR (79 aa). Low complexity predominate over residues 88–99; the sequence is PAQAAMEGPQPE. Positions 103–162 form a DNA-binding region, homeobox; the sequence is PRTRRTKFTLLQVEELESVFRHTQYPDVPTRRELAENLGVTEDKVRVWFKNKRARCRRHQ. Positions 155–164 match the Nuclear localization signal motif; it reads RARCRRHQRE.

The protein belongs to the paired-like homeobox family. PEPP subfamily. In terms of assembly, does not interact with itself. In terms of tissue distribution, ovary, testis and epididymis. Also detected in the prostate and the mammary gland. Expressed in many tumor cell lines derived from acute lymphocytic leukemia, prostate, endometrial adenocarcinoma, melanoma, bladder carcinoma, colon carcinoma, erythroleukemia and breast carcinoma. Not expressed in placenta. In testis, mainly expressed in germ cells, but also detected in somatic cells such as Sertoli cells, Leydig cells and peritubular cells.

The protein localises to the nucleus. Functionally, transcription factor maybe involved in reproductive processes. Modulates expression of target genes encoding proteins involved in processes relevant to spermatogenesis. The polypeptide is Rhox homeobox family member 1 (Homo sapiens (Human)).